A 575-amino-acid chain; its full sequence is uncharacterized protein (575 aa).

The protein resides in the cytoplasm. It is found in the cytoskeleton. Its subcellular location is the microtubule organizing center. The protein localises to the spindle pole body. This is an uncharacterized protein from Schizosaccharomyces pombe (strain 972 / ATCC 24843) (Fission yeast).